The following is a 132-amino-acid chain: Small ribosomal subunit protein uS8c (132 aa).

It belongs to the universal ribosomal protein uS8 family. As to quaternary structure, part of the 30S ribosomal subunit.

The protein resides in the plastid. The protein localises to the chloroplast. In terms of biological role, one of the primary rRNA binding proteins, it binds directly to 16S rRNA central domain where it helps coordinate assembly of the platform of the 30S subunit. The protein is Small ribosomal subunit protein uS8c (rps8) of Zygnema circumcarinatum (Green alga).